A 353-amino-acid chain; its full sequence is Uroporphyrinogen decarboxylase (353 aa).

Substrate-binding positions include Arg-35–Arg-39, Phe-54, Asp-84, Tyr-160, Ser-215, and His-329.

This sequence belongs to the uroporphyrinogen decarboxylase family. Homodimer.

It localises to the cytoplasm. The catalysed reaction is uroporphyrinogen III + 4 H(+) = coproporphyrinogen III + 4 CO2. It functions in the pathway porphyrin-containing compound metabolism; protoporphyrin-IX biosynthesis; coproporphyrinogen-III from 5-aminolevulinate: step 4/4. Catalyzes the decarboxylation of four acetate groups of uroporphyrinogen-III to yield coproporphyrinogen-III. The protein is Uroporphyrinogen decarboxylase of Staphylococcus epidermidis (strain ATCC 12228 / FDA PCI 1200).